A 123-amino-acid polypeptide reads, in one-letter code: MPTINQLVRKPRKSRSSLNKAPALQHNPQKRAVCVKVYTTTPKKPNSALRKVARVKIAGYGSEVIAYIPGEGHNLQEHSVILIRGGRVKDLPGVRYHIIRGALDSRGVQNRKKARSKYGVKKS.

Residues 1–26 (MPTINQLVRKPRKSRSSLNKAPALQH) are disordered. The residue at position 90 (aspartate 90) is a 3-methylthioaspartic acid.

This sequence belongs to the universal ribosomal protein uS12 family. Part of the 30S ribosomal subunit. Contacts proteins S8 and S17. May interact with IF1 in the 30S initiation complex.

Its function is as follows. With S4 and S5 plays an important role in translational accuracy. In terms of biological role, interacts with and stabilizes bases of the 16S rRNA that are involved in tRNA selection in the A site and with the mRNA backbone. Located at the interface of the 30S and 50S subunits, it traverses the body of the 30S subunit contacting proteins on the other side and probably holding the rRNA structure together. The combined cluster of proteins S8, S12 and S17 appears to hold together the shoulder and platform of the 30S subunit. The sequence is that of Small ribosomal subunit protein uS12 from Ehrlichia chaffeensis (strain ATCC CRL-10679 / Arkansas).